The following is a 763-amino-acid chain: Endoplasmic reticulum membrane sensor NFE2L1 (763 aa).

A helical; Signal-anchor for type II membrane protein membrane pass occupies residues 7 to 24 (YLTEGLLQFTILLSLIGV). Residues 108 to 150 (DPEGSVSGSQPSSGLALESSSGLQDVTGPDNGVRESETEQGFS) are disordered. The span at 116–131 (SQPSSGLALESSSGLQ) shows a compositional bias: low complexity. The tract at residues 180-188 (IFDYSHRQK) is cholesterol recognition/amino acid consensus (CRAC) region. 2 N-linked (GlcNAc...) asparagine glycosylation sites follow: asparagine 338 and asparagine 350. Residues 369 to 373 (SPEVE) are CPD. An N-linked (GlcNAc...) asparagine glycan is attached at asparagine 413. Disordered stretches follow at residues 460 to 523 (EEEF…DSET) and 585 to 604 (TLKK…QMSR). The short motif at 466–470 (DSGLS) is the Destruction motif element. Positions 466 to 514 (DSGLSLDSSHSPSSLSSSEGSSSSSSSSSSSSSSSASSSASSSFSEEGA) are enriched in low complexity. Serine 519 carries the phosphoserine; by CK2 modification. Over residues 589–604 (GSKEKQADFLDKQMSR) the composition is skewed to basic and acidic residues. Serine 590 bears the Phosphoserine; by PKA mark. The 64-residue stretch at 645–708 (LIRDIRRRGK…RQMKQKVQSL (64 aa)) folds into the bZIP domain. A basic motif region spans residues 647-666 (RDIRRRGKNKMAAQNCRKRK). The tract at residues 673 to 687 (LERDVEDLQRDKARL) is leucine-zipper. The Nuclear localization signal motif lies at 752 to 759 (RRQERKPK).

It belongs to the bZIP family. CNC subfamily. As to quaternary structure, interacts with KEAP1. Interacts (via CPD region) with FBXW7; leading to its ubiquitination and degradation. Interacts with SYVN1/HRD1; leading to its ubiquitination and degradation. Interacts (when ubiquitinated) with DDI2; leading to its cleavage. In terms of assembly, interacts (via the bZIP domain) with small MAF protein (MAFF, MAFG or MAFK); required for binding to antioxidant response elements (AREs) on DNA. Interacts (via Destruction motif) with BTRC; leading to its ubiquitination and degradation. Interacts with CEBPB; the heterodimer represses expression of DSPP during odontoblast differentiation. Interacts with MOTS-c, a peptide produced by the mitochondrially encoded 12S rRNA MT-RNR1. Post-translationally, cleaved at Leu-104 by the aspartyl protease DDI2 following retrotranslocation, releasing the protein from the endoplasmic reticulum membrane and forming the transcription factor NRF1 that translocates into the nucleus. Ubiquitination is prerequisite for cleavage by aspartyl protease DDI2. In terms of processing, N-glycosylated in normal conditions, when it has a single-pass type II membrane protein topology, with the DNA-binding domain facing the endoplasmic reticulum lumen. Deglycosylated during retrotranslocation to the cytosolic side of the membrane, to have a single-pass type III membrane protein topology with the major part of the protein facing the cytosol. Ubiquitinated by the SCF(FBXW7) complex and SYVN1/HRD1, leading to its degradation by the proteasome. Ubiquitinated during retrotranslocation to the cytosolic side of the membrane: ubiquitination does not lead to degradation and is required for processing by the aspartyl protease DDI2 and subsequent release from the endoplasmic reticulum membrane. Post-translationally, phosphorylation by CK2 at Ser-519 inhibits transcription factor activity, possibly by affecting DNA-binding activity. Phosphorylation at Ser-590 is required for interaction with CEBPB. In terms of processing, ubiquitinated by the SCF(BTRC) complex in the nucleus, leading to its degradation by the proteasome.

The protein localises to the endoplasmic reticulum membrane. It localises to the nucleus. In terms of biological role, endoplasmic reticulum membrane sensor that translocates into the nucleus in response to various stresses to act as a transcription factor. Constitutes a precursor of the transcription factor NRF1. Able to detect various cellular stresses, such as cholesterol excess, oxidative stress or proteasome inhibition. In response to stress, it is released from the endoplasmic reticulum membrane following cleavage by the protease DDI2 and translocates into the nucleus to form the transcription factor NRF1. Acts as a key sensor of cholesterol excess: in excess cholesterol conditions, the endoplasmic reticulum membrane form of the protein directly binds cholesterol via its CRAC motif, preventing cleavage and release of the transcription factor NRF1, thereby allowing expression of genes promoting cholesterol removal, such as CD36. Involved in proteasome homeostasis: in response to proteasome inhibition, it is released from the endoplasmic reticulum membrane, translocates to the nucleus and activates expression of genes encoding proteasome subunits. CNC-type bZIP family transcription factor that translocates to the nucleus and regulates expression of target genes in response to various stresses. Heterodimerizes with small-Maf proteins (MAFF, MAFG or MAFK) and binds DNA motifs including the antioxidant response elements (AREs), which regulate expression of genes involved in oxidative stress response. Activates or represses expression of target genes, depending on the context. Plays a key role in cholesterol homeostasis by acting as a sensor of cholesterol excess: in low cholesterol conditions, translocates into the nucleus and represses expression of genes involved in defense against cholesterol excess, such as CD36. In excess cholesterol conditions, the endoplasmic reticulum membrane form of the protein directly binds cholesterol via its CRAC motif, preventing cleavage and release of the transcription factor NRF1, thereby allowing expression of genes promoting cholesterol removal. Critical for redox balance in response to oxidative stress: acts by binding the AREs motifs on promoters and mediating activation of oxidative stress response genes, such as GCLC, GCLM, GSS, MT1 and MT2. Plays an essential role during fetal liver hematopoiesis: probably has a protective function against oxidative stress and is involved in lipid homeostasis in the liver. Involved in proteasome homeostasis: in response to proteasome inhibition, mediates the 'bounce-back' of proteasome subunits by translocating into the nucleus and activating expression of genes encoding proteasome subunits. Also involved in regulating glucose flux. Together with CEBPB; represses expression of DSPP during odontoblast differentiation. In response to ascorbic acid induction, activates expression of SP7/Osterix in osteoblasts. The chain is Endoplasmic reticulum membrane sensor NFE2L1 from Bos taurus (Bovine).